The chain runs to 80 residues: Small ribosomal subunit protein uS17 (80 aa).

This sequence belongs to the universal ribosomal protein uS17 family. In terms of assembly, part of the 30S ribosomal subunit.

Functionally, one of the primary rRNA binding proteins, it binds specifically to the 5'-end of 16S ribosomal RNA. The polypeptide is Small ribosomal subunit protein uS17 (Brucella abortus (strain S19)).